We begin with the raw amino-acid sequence, 1073 residues long: Guanylyl cyclase C (1073 aa).

The first 23 residues, 1-23 (MKTLLLDLALWSLLFQPGWLSFS), serve as a signal peptide directing secretion. The Extracellular portion of the chain corresponds to 24–430 (SQVSQNCHNG…PNDITGRGPQ (407 aa)). N-linked (GlcNAc...) asparagine glycosylation is found at asparagine 32, asparagine 75, asparagine 79, asparagine 195, asparagine 284, asparagine 307, asparagine 345, and asparagine 402. Residues 431 to 454 (ILMIAVFTLTGAVVLLLLVALLML) form a helical membrane-spanning segment. At 455–1073 (RKYRKDYELR…NTTDKESTYF (619 aa)) the chain is on the cytoplasmic side. The Protein kinase domain maps to 489–749 (LKIDDDKRRD…KIETTLAKIF (261 aa)). A Guanylate cyclase domain is found at 824–954 (TIYFSDIVGF…DTVNTASRME (131 aa)).

The protein belongs to the adenylyl cyclase class-4/guanylyl cyclase family. In terms of assembly, homotrimer. Interacts via its C-terminal region with NHERF4. Interacts with the lectin chaperone VIP36. In terms of processing, glycosylation at Asn-75 and/or Asn-79 is required for interaction with VIP36 while glycosylation at Asn-345 and Asn-402 modulates ligand-mediated GUCY2C activation.

The protein localises to the cell membrane. Its subcellular location is the endoplasmic reticulum membrane. The catalysed reaction is GTP = 3',5'-cyclic GMP + diphosphate. Its function is as follows. Guanylyl cyclase that catalyzes synthesis of cyclic GMP (cGMP) from GTP. Receptor for the E.coli heat-stable enterotoxin; E.coli enterotoxin markedly stimulates the accumulation of cGMP in mammalian cells expressing GUCY2C. Also activated by the endogenous peptides guanylin and uroguanylin. This Homo sapiens (Human) protein is Guanylyl cyclase C.